A 104-amino-acid chain; its full sequence is L-rhamnose mutarotase (104 aa).

Tyr18 provides a ligand contact to substrate. His22 serves as the catalytic Proton donor. Substrate is bound by residues Tyr41 and 76–77 (WW).

This sequence belongs to the rhamnose mutarotase family. In terms of assembly, homodimer.

The protein resides in the cytoplasm. It catalyses the reaction alpha-L-rhamnose = beta-L-rhamnose. Its pathway is carbohydrate metabolism; L-rhamnose metabolism. Functionally, involved in the anomeric conversion of L-rhamnose. This Jannaschia sp. (strain CCS1) protein is L-rhamnose mutarotase.